Consider the following 894-residue polypeptide: Leucine--tRNA ligase, mitochondrial (894 aa).

A mitochondrion-targeting transit peptide spans 1–9; sequence MLSRPSSRF. Positions 56–66 match the 'HIGH' region motif; sequence PYPSGALHIGH. A 'KMSKS' region motif is present at residues 646 to 650; it reads KMSKS. Residue Lys649 coordinates ATP.

This sequence belongs to the class-I aminoacyl-tRNA synthetase family.

Its subcellular location is the mitochondrion matrix. It catalyses the reaction tRNA(Leu) + L-leucine + ATP = L-leucyl-tRNA(Leu) + AMP + diphosphate. Catalyzes the attachment of leucine to tRNA(Leu) in the mitochondrion. This chain is Leucine--tRNA ligase, mitochondrial (NAM2), found in Saccharomyces cerevisiae (strain ATCC 204508 / S288c) (Baker's yeast).